Consider the following 118-residue polypeptide: MLVTLMKAKLHRATVTQADLDYEGSIAIDRDLLDASGILPHEQVDVLNITTGARFTTYAIEAPRGSKVIGVNGAAARLVQKGDKVIVVTYGMLPAEEARNYAPTVVLLDDGNEIKKAA.

The active-site Schiff-base intermediate with substrate; via pyruvic acid is Ser25. Residue Ser25 is modified to Pyruvic acid (Ser). A substrate-binding site is contributed by Thr57. The active-site Proton donor is Tyr58. Substrate is bound at residue Gly73 to Ala75.

Belongs to the PanD family. As to quaternary structure, heterooctamer of four alpha and four beta subunits. It depends on pyruvate as a cofactor. In terms of processing, is synthesized initially as an inactive proenzyme, which is activated by self-cleavage at a specific serine bond to produce a beta-subunit with a hydroxyl group at its C-terminus and an alpha-subunit with a pyruvoyl group at its N-terminus.

Its subcellular location is the cytoplasm. It carries out the reaction L-aspartate + H(+) = beta-alanine + CO2. It functions in the pathway cofactor biosynthesis; (R)-pantothenate biosynthesis; beta-alanine from L-aspartate: step 1/1. Functionally, catalyzes the pyruvoyl-dependent decarboxylation of aspartate to produce beta-alanine. This chain is Aspartate 1-decarboxylase, found in Phenylobacterium zucineum (strain HLK1).